We begin with the raw amino-acid sequence, 551 residues long: Glucans biosynthesis protein D (551 aa).

Residues 1 to 32 constitute a signal peptide (tat-type signal); the sequence is MNRRRFIKASLALAAACGTPGLATLFSRNAWA.

This sequence belongs to the OpgD/OpgG family. In terms of processing, predicted to be exported by the Tat system. The position of the signal peptide cleavage has not been experimentally proven.

The protein resides in the periplasm. It functions in the pathway glycan metabolism; osmoregulated periplasmic glucan (OPG) biosynthesis. Probably involved in the control of the structural glucose backbone of osmoregulated periplasmic glucans (OPGs). The protein is Glucans biosynthesis protein D of Cronobacter sakazakii (strain ATCC BAA-894) (Enterobacter sakazakii).